The sequence spans 162 residues: Allantoicase (162 aa).

Belongs to the allantoicase family. As to quaternary structure, homohexamer. As to expression, expressed in zygote.

It carries out the reaction allantoate + H2O = (S)-ureidoglycolate + urea. It participates in nitrogen metabolism; (S)-allantoin degradation; (S)-ureidoglycolate from allantoate (aminidohydrolase route): step 1/1. Catalyzes the degradation of allantoate to (-)-ureidoglycolate and (+)-ureidoglycolate to glyoxylate. This chain is Allantoicase, found in Chlamydomonas reinhardtii (Chlamydomonas smithii).